We begin with the raw amino-acid sequence, 194 residues long: Phosphoheptose isomerase (194 aa).

In terms of domain architecture, SIS spans 37–194; sequence ISNSFKQGGK…LIEFEMAKQA (158 aa). Position 52–54 (52–54) interacts with substrate; it reads NGG. Residues His-61 and Glu-65 each coordinate Zn(2+). Substrate contacts are provided by residues Glu-65, 93-94, 119-121, Ser-124, and Gln-172; these read ND and STS. Zn(2+)-binding residues include Gln-172 and His-180.

This sequence belongs to the SIS family. GmhA subfamily. In terms of assembly, homotetramer. It depends on Zn(2+) as a cofactor.

Its subcellular location is the cytoplasm. It catalyses the reaction 2 D-sedoheptulose 7-phosphate = D-glycero-alpha-D-manno-heptose 7-phosphate + D-glycero-beta-D-manno-heptose 7-phosphate. It participates in carbohydrate biosynthesis; D-glycero-D-manno-heptose 7-phosphate biosynthesis; D-glycero-alpha-D-manno-heptose 7-phosphate and D-glycero-beta-D-manno-heptose 7-phosphate from sedoheptulose 7-phosphate: step 1/1. Its function is as follows. Catalyzes the isomerization of sedoheptulose 7-phosphate in D-glycero-D-manno-heptose 7-phosphate. This Haemophilus influenzae (strain 86-028NP) protein is Phosphoheptose isomerase.